Here is a 66-residue protein sequence, read N- to C-terminus: Large ribosomal subunit protein uL29 (66 aa).

Belongs to the universal ribosomal protein uL29 family.

This is Large ribosomal subunit protein uL29 from Roseiflexus castenholzii (strain DSM 13941 / HLO8).